The following is a 168-amino-acid chain: uncharacterized protein (168 aa).

Disordered stretches follow at residues Met-1–Trp-81 and Arg-119–Ala-150. Low complexity predominate over residues Ser-7–Ser-34. The span at Thr-43 to Met-67 shows a compositional bias: basic residues. The segment covering Glu-123–Leu-146 has biased composition (polar residues).

This is an uncharacterized protein from Human adenovirus C serotype 2 (HAdV-2).